The chain runs to 400 residues: Delta(12) fatty acid desaturase (400 aa).

The helical transmembrane segment at 91 to 111 (LAWPAYWIMQGIVCTGIWVLA) threads the bilayer. The Histidine box-1 signature appears at 112 to 116 (HECGH). The Histidine box-2 motif lies at 148 to 152 (HSKHH). 3 helical membrane passes run 199–219 (IVTL…YLIM), 245–265 (FFDI…LIYA), and 277–297 (YYIV…FLQH). A Histidine box-3 motif is present at residues 339–343 (HVAHH).

The protein belongs to the fatty acid desaturase type 1 family.

It is found in the membrane. It catalyses the reaction (9Z)-octadecenoyl-CoA + 2 Fe(II)-[cytochrome b5] + O2 + 2 H(+) = (9Z,12Z)-octadecadienoyl-CoA + 2 Fe(III)-[cytochrome b5] + 2 H2O. The catalysed reaction is (9Z)-hexadecenoyl-CoA + 2 Fe(II)-[cytochrome b5] + O2 + 2 H(+) = (9Z,12Z)-hexadecadienoyl-CoA + 2 Fe(III)-[cytochrome b5] + 2 H2O. Its pathway is lipid metabolism; polyunsaturated fatty acid biosynthesis. In terms of biological role, catalyzes the desaturation of oleic acid (Delta(9)-18:1) to linoleic acid (Delta(9), Delta(12)-18:2). In Mortierella alpina (Oleaginous fungus), this protein is Delta(12) fatty acid desaturase.